A 467-amino-acid polypeptide reads, in one-letter code: Argininosuccinate lyase (467 aa).

It belongs to the lyase 1 family. Argininosuccinate lyase subfamily.

It is found in the cytoplasm. The catalysed reaction is 2-(N(omega)-L-arginino)succinate = fumarate + L-arginine. It participates in amino-acid biosynthesis; L-arginine biosynthesis; L-arginine from L-ornithine and carbamoyl phosphate: step 3/3. The chain is Argininosuccinate lyase from Rhizobium johnstonii (strain DSM 114642 / LMG 32736 / 3841) (Rhizobium leguminosarum bv. viciae).